Here is a 416-residue protein sequence, read N- to C-terminus: MSTNIKIIKKVLNGYVGFANLPKQWHRKSIRRGFSLNIMAIGESGLGKATLINTLFNRDIITSQHDSDEFDEGEEEDVSVKIKSTQAEIEEDGVKLKVSVITAPGFGESINNVEAWKPIVDEINSRFDSYLEAESRINRTAVVDNRVHAFLYFIEPTGHSLRALDIALMKQVHEKVNLIPVIAKSDTLTDEEILEFKHRILADISHQGIKIFKPTDFEYDEEESANTRSIIDSFPFAVVGSTNEVQTPDGRLVRGRKYPWGVIEVDNENHNDFVKLRQLLVRNFLEELKEHTANVLYENYRTEKLKRMGIEQDNTVFREFDPAAKQEEERALHEAKLAKMEAEMKSVFQQKVSEKEKKLQRSEADLFARHKEMKDKLTKQIKLLEEKKAQLEKQKLLPQDPPAQPAPQKSRKGFLR.

The Septin-type G domain occupies 32–307 (RGFSLNIMAI…ENYRTEKLKR (276 aa)). Residues 42–49 (GESGLGKA) are G1 motif. GTP contacts are provided by residues 42-49 (GESGLGKA), serine 79, glycine 105, 184-192 (KSDTLTDEE), glycine 240, and arginine 256. The interval 102–105 (TAPG) is G3 motif. The G4 motif stretch occupies residues 183–186 (AKSD). A coiled-coil region spans residues 323–399 (AAKQEEERAL…QLEKQKLLPQ (77 aa)). Positions 392 to 416 (EKQKLLPQDPPAQPAPQKSRKGFLR) are disordered.

It belongs to the TRAFAC class TrmE-Era-EngA-EngB-Septin-like GTPase superfamily. Septin GTPase family.

The protein localises to the bud neck. In terms of biological role, plays a role in the cell cycle. Involved in the formation of the ring of filaments in the neck region at the mother-bud junction during mitosis. The chain is Cell division control protein 3 (CDC3) from Candida albicans (Yeast).